Reading from the N-terminus, the 135-residue chain is Putative nickel-responsive regulator (135 aa).

Ni(2+) contacts are provided by H79, H90, H92, and C98.

This sequence belongs to the transcriptional regulatory CopG/NikR family. It depends on Ni(2+) as a cofactor.

Functionally, transcriptional regulator. The polypeptide is Putative nickel-responsive regulator (Dictyoglomus thermophilum (strain ATCC 35947 / DSM 3960 / H-6-12)).